A 232-amino-acid chain; its full sequence is Cell surface superoxide dismutase [Cu-Zn] 4 (232 aa).

The signal sequence occupies residues 1 to 15 (MKYLSIISIVALALA). Asn-53 is a glycosylation site (N-linked (GlcNAc...) asparagine). His-75 and His-77 together coordinate Cu cation. An N-linked (GlcNAc...) asparagine glycan is attached at Asn-86. His-93 is a Cu cation binding site. Zn(2+) is bound at residue His-93. Asn-98 is a glycosylation site (N-linked (GlcNAc...) asparagine). Position 113 (Asp-113) interacts with Zn(2+). An N-linked (GlcNAc...) asparagine glycan is attached at Asn-120. His-153 contributes to the Cu cation binding site. N-linked (GlcNAc...) asparagine glycosylation is found at Asn-156, Asn-164, Asn-182, Asn-193, and Asn-196. Residues 174-208 (TASAATWSNSSSSSSSSSKNSTNGSSGSSTSASQG) are compositionally biased toward low complexity. Positions 174–211 (TASAATWSNSSSSSSSSSKNSTNGSSGSSTSASQGSGA) are disordered. Ser-209 carries GPI-anchor amidated serine lipidation. Residues 210-232 (GAGRAEISGFLAAGIAGVVAALI) constitute a propeptide, removed in mature form. Arg-213 is a binding site for substrate.

The protein belongs to the Cu-Zn superoxide dismutase family. Requires Cu cation as cofactor. The cofactor is Zn(2+). In terms of processing, the GPI-anchor is attached to the protein in the endoplasmic reticulum and serves to target the protein to the cell surface. There, the glucosamine-inositol phospholipid moiety is cleaved off and the GPI-modified mannoprotein is covalently attached via its lipidless GPI glycan remnant to the 1,6-beta-glucan of the outer cell wall layer.

It localises to the secreted. It is found in the cell wall. The protein resides in the membrane. It carries out the reaction 2 superoxide + 2 H(+) = H2O2 + O2. Superoxide dismutases serve to convert damaging superoxide radicals, a key form of ROS, to less damaging hydrogen peroxide that can be converted into water by catalase action. Degrades host-derived reactive oxygen species to escape innate immune surveillance. Involved in the occurrence of miconazole-tolerant persisters in biofilms. Persisters are cells that survive high doses of an antimicrobial agent. This is Cell surface superoxide dismutase [Cu-Zn] 4 (SOD4) from Candida albicans (strain SC5314 / ATCC MYA-2876) (Yeast).